We begin with the raw amino-acid sequence, 658 residues long: Integrator complex subunit 9 (658 aa).

Lys-58 participates in a covalent cross-link: Glycyl lysine isopeptide (Lys-Gly) (interchain with G-Cter in SUMO2). Residues 548-572 (DNKHVLQPPPKPTQPTSSKKRKRVN) form a disordered region. Positions 566–570 (KKRKR) match the Nuclear localization signal motif.

The protein belongs to the metallo-beta-lactamase superfamily. RNA-metabolizing metallo-beta-lactamase-like family. INTS9 subfamily. In terms of assembly, component of the Integrator complex, composed of core subunits INTS1, INTS2, INTS3, INTS4, INTS5, INTS6, INTS7, INTS8, INTS9/RC74, INTS10, INTS11/CPSF3L, INTS12, INTS13, INTS14 and INTS15. The core complex associates with protein phosphatase 2A subunits PPP2CA and PPP2R1A, to form the Integrator-PP2A (INTAC) complex. INTS9 is part of the RNA endonuclease subcomplex, composed of INTS4, INTS9, INTS11 and inositol hexakisphosphate (InsP6). Interacts with WDR73; interaction is required for the assembly of the RNA endonuclease subcomplex in the cytoplasm. Interacts with BRAT1; interaction is required for the assembly of the RNA endonuclease subcomplex. Interacts with ESRRB, ESRRB is not a core component of the Integrator complex and this association is a bridge for the interaction with the multiprotein complex Integrator; attracts the transcriptional machinery.

The protein resides in the nucleus. Its subcellular location is the cytoplasm. Component of the integrator complex, a multiprotein complex that terminates RNA polymerase II (Pol II) transcription in the promoter-proximal region of genes. The integrator complex provides a quality checkpoint during transcription elongation by driving premature transcription termination of transcripts that are unfavorably configured for transcriptional elongation: the complex terminates transcription by (1) catalyzing dephosphorylation of the C-terminal domain (CTD) of Pol II subunit POLR2A/RPB1 and SUPT5H/SPT5, (2) degrading the exiting nascent RNA transcript via endonuclease activity and (3) promoting the release of Pol II from bound DNA. The integrator complex is also involved in terminating the synthesis of non-coding Pol II transcripts, such as enhancer RNAs (eRNAs), small nuclear RNAs (snRNAs), telomerase RNAs and long non-coding RNAs (lncRNAs). Mediates recruitment of cytoplasmic dynein to the nuclear envelope, probably as component of the integrator complex. The polypeptide is Integrator complex subunit 9 (Ints9) (Mus musculus (Mouse)).